A 470-amino-acid chain; its full sequence is 24-hydroxycholesterol 7-alpha-hydroxylase (470 aa).

The next 2 membrane-spanning stretches (helical) occupy residues 3–23 (IMELFSPIAIAVLGSCVLFLF) and 270–290 (VVLWAALANAPPIAFWTLGYI). Residue C415 coordinates heme.

Belongs to the cytochrome P450 family. It depends on heme as a cofactor. Liver specific. Hepatic expression is sexually dimorphic (female &gt; male).

It localises to the endoplasmic reticulum membrane. The protein resides in the microsome membrane. It catalyses the reaction (24S)-hydroxycholesterol + reduced [NADPH--hemoprotein reductase] + O2 = (24S)-7alpha-dihydroxycholesterol + oxidized [NADPH--hemoprotein reductase] + H2O + H(+). Its pathway is steroid metabolism; cholesterol degradation. It functions in the pathway lipid metabolism; bile acid biosynthesis. Its function is as follows. A cytochrome P450 monooxygenase involved in neural cholesterol clearance through bile acid synthesis. Catalyzes 7-alpha hydroxylation of (24S)-hydroxycholesterol, a neural oxysterol that is metabolized to bile acids in the liver. Mechanistically, uses molecular oxygen inserting one oxygen atom into a substrate, and reducing the second into a water molecule, with two electrons provided by NADPH via cytochrome P450 reductase (CPR; NADPH-ferrihemoprotein reductase). This chain is 24-hydroxycholesterol 7-alpha-hydroxylase (Cyp39a1), found in Mus musculus (Mouse).